The sequence spans 148 residues: 3-dehydroquinate dehydratase (148 aa).

The active-site Proton acceptor is tyrosine 24. Positions 75, 81, and 88 each coordinate substrate. Histidine 101 (proton donor) is an active-site residue. Substrate is bound by residues 102–103 (LS) and arginine 112.

The protein belongs to the type-II 3-dehydroquinase family. In terms of assembly, homododecamer.

It carries out the reaction 3-dehydroquinate = 3-dehydroshikimate + H2O. It functions in the pathway metabolic intermediate biosynthesis; chorismate biosynthesis; chorismate from D-erythrose 4-phosphate and phosphoenolpyruvate: step 3/7. In terms of biological role, catalyzes a trans-dehydration via an enolate intermediate. In Sinorhizobium medicae (strain WSM419) (Ensifer medicae), this protein is 3-dehydroquinate dehydratase.